We begin with the raw amino-acid sequence, 290 residues long: MTAATHTKAQVLAAALPWLKQLHGKIVVVKYGGNAMTDDTLKAAFAADMVFLRNCGVHPVVVHGGGLQISAMLKRLGIPGDFRGGFRVTTPEVLDVARMVLFGQVGRELVGLINAHGPYAVGITGEDAHLFTAVRRDVVVDGVATDIGLVGDVEHVNTEAVRDLIAAGRIPVVSTIAPDANGVVHNINADTAAAALAAALSAEKLLMLTDIEGLYTDWPDRNSLVSQINTDELTELLPTLEAGMVPKIEACLRAVTEGVPSAHVIDGRVEHCVLVELFTDEGTGTKVVNP.

Residues 65–66 (GG), R87, and N186 contribute to the substrate site.

The protein belongs to the acetylglutamate kinase family. ArgB subfamily.

It localises to the cytoplasm. It catalyses the reaction N-acetyl-L-glutamate + ATP = N-acetyl-L-glutamyl 5-phosphate + ADP. Its pathway is amino-acid biosynthesis; L-arginine biosynthesis; N(2)-acetyl-L-ornithine from L-glutamate: step 2/4. Functionally, catalyzes the ATP-dependent phosphorylation of N-acetyl-L-glutamate. The sequence is that of Acetylglutamate kinase from Mycobacterium sp. (strain KMS).